Reading from the N-terminus, the 682-residue chain is Penicillin-binding protein activator LpoA (682 aa).

The signal sequence occupies residues 1 to 26 (MLSSITVRTKSGRLIPLVLAATLLAA). Cys-27 carries N-palmitoyl cysteine lipidation. Cys-27 carries the S-diacylglycerol cysteine lipid modification.

The protein belongs to the LpoA family. Interacts with PBP1a.

Its subcellular location is the cell outer membrane. Functionally, regulator of peptidoglycan synthesis that is essential for the function of penicillin-binding protein 1A (PBP1a). The polypeptide is Penicillin-binding protein activator LpoA (Edwardsiella ictaluri (strain 93-146)).